Consider the following 63-residue polypeptide: Transmembrane protein 033R (63 aa).

The protein is Transmembrane protein 033R of Dryophytes versicolor (chameleon treefrog).